The primary structure comprises 149 residues: 3-hydroxyacyl-[acyl-carrier-protein] dehydratase FabZ (149 aa).

H48 is a catalytic residue.

The protein belongs to the thioester dehydratase family. FabZ subfamily.

It localises to the cytoplasm. It catalyses the reaction a (3R)-hydroxyacyl-[ACP] = a (2E)-enoyl-[ACP] + H2O. In terms of biological role, involved in unsaturated fatty acids biosynthesis. Catalyzes the dehydration of short chain beta-hydroxyacyl-ACPs and long chain saturated and unsaturated beta-hydroxyacyl-ACPs. This Thermomicrobium roseum (strain ATCC 27502 / DSM 5159 / P-2) protein is 3-hydroxyacyl-[acyl-carrier-protein] dehydratase FabZ.